The chain runs to 500 residues: MSKQETYIDYNYIERLNAVNLNRSYDEEIVFIMTVGGVVKVKKELLVSVSNYFKLITKNQSNEITVSFQYESFLDIIKYIETGIVTIDLDNVENIFSISCSKAIDFLKNSCIDFMSKHITDSTCVKIYKIGFSNGCFAVYNDAIAYIRKRFTKIETDILLSLSLFDLRIILKSGELDVSSEDDVLLFIIKWSRHKKSNRRKSFTLVTEVLRYNYLSIYGKYKLTKWLARFGKNNNVELNENELPRISYQHRFTNRRYTMVTPSSFSINMLGNVSVKNELSIINSIAENHNPYCGSVLMNDILYLIGGINKSLDPVSDITSVDTRSFIELHTPPLLHPRKCPGVAIFKNRIYVVGGIGYDGPLKTVESWSPGEQQWREEVPLLQPRFNPCIIGTDNDLYVVGGISEDDKTIEIYSYEENTWSIGNAMNYSHFGGCIAYHHGYIYMIGGLSFIDNIHVFTMVEKYNPHSNKWTVEKSLPFPRFNSSLCIIEDSIAIIGWIYY.

The BTB domain occupies 27–89 (EEIVFIMTVG…IETGIVTIDL (63 aa)). 4 Kelch repeats span residues 301 to 348 (ILYL…IFKN), 349 to 395 (RIYV…GTDN), 397 to 440 (LYVV…YHHG), and 441 to 490 (YIYM…IIED).

This sequence belongs to the poxviruses Kelch family.

This Swinepox virus (strain Kasza) (SWPV) protein is Protein C13.